Here is a 567-residue protein sequence, read N- to C-terminus: Arginine--tRNA ligase (567 aa).

Positions 121–131 match the 'HIGH' region motif; sequence ANPNGPLHVGH.

The protein belongs to the class-I aminoacyl-tRNA synthetase family.

It is found in the cytoplasm. The catalysed reaction is tRNA(Arg) + L-arginine + ATP = L-arginyl-tRNA(Arg) + AMP + diphosphate. In Methanococcoides burtonii (strain DSM 6242 / NBRC 107633 / OCM 468 / ACE-M), this protein is Arginine--tRNA ligase.